We begin with the raw amino-acid sequence, 207 residues long: Partner of Y14 and mago (207 aa).

Disordered stretches follow at residues methionine 1–arginine 28 and glutamine 52–serine 133. The stretch at leucine 64 to glutamine 91 forms a coiled coil. A compositionally biased stretch (basic and acidic residues) spans glutamate 68 to arginine 90. Residues proline 123–serine 133 show a composition bias toward polar residues. Positions alanine 152–glutamine 184 form a coiled coil.

The protein belongs to the pym family. As to quaternary structure, interacts (via N-terminus) with mago and tsu/RBM8A; the interaction is direct. Expression detected in the ovary. In the oocyte expressed in the germarium, nurse cell and follicle cell.

The protein localises to the cytoplasm. The protein resides in the nucleus. In terms of biological role, regulator of the exon junction complex (EJC), a multiprotein complex that associates immediately upstream of the exon-exon junction on mRNAs and serves as a positional landmark for the intron exon structure of genes and directs post-transcriptional processes in the cytoplasm such as mRNA export, nonsense-mediated mRNA decay (NMD) or translation. Acts as an EJC disassembly factor by disrupting mature EJC from spliced mRNAs. Required for normal localization of osk mRNA to the posterior pole of the developing oocyte. Does not interact with the small ribosomal unit or components of the translation initiation complex. May not function in cap-dependent translation regulation. This chain is Partner of Y14 and mago, found in Drosophila melanogaster (Fruit fly).